A 222-amino-acid polypeptide reads, in one-letter code: Octanoyltransferase (222 aa).

Residues 34-214 (GEAPSTVLLL…EFRKHEEALV (181 aa)) form the BPL/LPL catalytic domain. Substrate is bound by residues 72-79 (RGGKLTWH), 144-146 (AIG), and 157-159 (GVA). Cysteine 175 functions as the Acyl-thioester intermediate in the catalytic mechanism.

The protein belongs to the LipB family.

It localises to the cytoplasm. It carries out the reaction octanoyl-[ACP] + L-lysyl-[protein] = N(6)-octanoyl-L-lysyl-[protein] + holo-[ACP] + H(+). It functions in the pathway protein modification; protein lipoylation via endogenous pathway; protein N(6)-(lipoyl)lysine from octanoyl-[acyl-carrier-protein]: step 1/2. Functionally, catalyzes the transfer of endogenously produced octanoic acid from octanoyl-acyl-carrier-protein onto the lipoyl domains of lipoate-dependent enzymes. Lipoyl-ACP can also act as a substrate although octanoyl-ACP is likely to be the physiological substrate. The polypeptide is Octanoyltransferase (Pseudarthrobacter chlorophenolicus (strain ATCC 700700 / DSM 12829 / CIP 107037 / JCM 12360 / KCTC 9906 / NCIMB 13794 / A6) (Arthrobacter chlorophenolicus)).